Consider the following 316-residue polypeptide: Ornithine carbamoyltransferase (316 aa).

Residues 59 to 62, Gln-86, Arg-110, and 137 to 140 each bind carbamoyl phosphate; these read STRT and HPCQ. L-ornithine contacts are provided by residues Asn-168, Asp-232, and 236–237; that span reads SM. Residues 273 to 274 and Arg-301 each bind carbamoyl phosphate; that span reads CL.

The protein belongs to the aspartate/ornithine carbamoyltransferase superfamily. OTCase family.

Its subcellular location is the cytoplasm. It carries out the reaction carbamoyl phosphate + L-ornithine = L-citrulline + phosphate + H(+). It participates in amino-acid biosynthesis; L-arginine biosynthesis; L-arginine from L-ornithine and carbamoyl phosphate: step 1/3. Reversibly catalyzes the transfer of the carbamoyl group from carbamoyl phosphate (CP) to the N(epsilon) atom of ornithine (ORN) to produce L-citrulline. In Listeria monocytogenes serovar 1/2a (strain ATCC BAA-679 / EGD-e), this protein is Ornithine carbamoyltransferase (argF).